The chain runs to 98 residues: Cytochrome c-552 (98 aa).

Positions 1 to 18 are cleaved as a signal peptide; the sequence is MKKFLLVAVVGLAGITFA. Heme c contacts are provided by cysteine 28, cysteine 31, histidine 32, and methionine 77.

The protein belongs to the cytochrome c family. In terms of processing, binds 1 heme c group covalently per subunit.

Its function is as follows. Reacts with hydrogenase. The chain is Cytochrome c-552 from Hydrogenobacter thermophilus (strain DSM 6534 / IAM 12695 / TK-6).